We begin with the raw amino-acid sequence, 647 residues long: Leucine aminopeptidase 2 (647 aa).

Substrate is bound by residues glutamine 169–glutamine 171 and proline 295–glutamate 300. Histidine 324 contributes to the Zn(2+) binding site. The Proton acceptor role is filled by glutamate 325. Zn(2+) is bound by residues histidine 328 and glutamate 347. Tyrosine 418 acts as the Proton donor in catalysis.

This sequence belongs to the peptidase M1 family. The cofactor is Zn(2+).

It localises to the cytoplasm. The protein localises to the nucleus. It catalyses the reaction an epoxide + H2O = an ethanediol. In terms of biological role, aminopeptidase that preferentially cleaves di- and tripeptides. Also has low epoxide hydrolase activity (in vitro). Can hydrolyze the epoxide leukotriene LTA(4) but it forms preferentially 5,6-dihydroxy-7,9,11,14-eicosatetraenoic acid rather than the cytokine leukotriene B(4) as the product compared to the homologous mammalian enzyme (in vitro). The polypeptide is Leucine aminopeptidase 2 (Yarrowia lipolytica (strain CLIB 122 / E 150) (Yeast)).